The primary structure comprises 2568 residues: Highly reducing polyketide synthase resH (2568 aa).

Residues 9 to 437 (PEPIAIVGMA…GANAHAILDA (429 aa)) form the Ketosynthase family 3 (KS3) domain. Catalysis depends on for beta-ketoacyl synthase activity residues C184, H319, and H359. One can recognise a Malonyl-CoA:ACP transacylase (MAT) domain in the interval 549-877 (FIFTGQGAQW…KLAGSLFLSG (329 aa)). Residues 942-1081 (HDLLGSRLPG…TNDQLLWPDD (140 aa)) are N-terminal hotdog fold. The region spanning 942–1244 (HDLLGSRLPG…FSSLETASSD (303 aa)) is the PKS/mFAS DH domain. H974 functions as the Proton acceptor; for dehydratase activity in the catalytic mechanism. The tract at residues 1091–1244 (NKDSYDRRWY…FSSLETASSD (154 aa)) is C-terminal hotdog fold. D1156 serves as the catalytic Proton donor; for dehydratase activity. The methyltransferase (CMet) domain stretch occupies residues 1295–1595 (VTRLAIRSSA…SGADVVLDDY (301 aa)). The 302-residue stretch at 1853 to 2154 (GRLDSFYFKE…QEDSVGLAVL (302 aa)) folds into the Enoyl reductase (ER) domain. In terms of domain architecture, Ketoreductase (KR) spans 2177–2357 (ASYLLIGCLG…QATSIALGMI (181 aa)). In terms of domain architecture, Carrier spans 2485–2563 (AVKSAILGLI…GLADQVVSLA (79 aa)). At S2522 the chain carries O-(pantetheine 4'-phosphoryl)serine.

Requires pantetheine 4'-phosphate as cofactor.

It functions in the pathway antifungal biosynthesis. In terms of biological role, highly reducing polyketide synthase; part of the gene cluster that mediates the biosynthesis of the tetrahydropyranyl antifungal agent restricticin that acts as an inhibitor of CYP51 and blocks the ergosterol biosynthesis. The highly reducing polyketide synthase resH, the short chain dehydrogenase resG, the cyclase resF, the FAD-dependent monooxygenase resA and the enoylreductase resD are required to generate the first stable intermediate desmethylrestrictinol. ResH with resD biosynthesize the first polyketide chain intermediate that is reduced by resG, followed by epoxidation by resA before 6-endo cyclization via epoxide opening by resF leads to desmethylrestrictinol. The methyltransferase resE then catalyzes the C4 O-methylation of desmethylrestrictinol to produce restrictinol, and the nonribosomal peptide synthetase resC catalyzes the C3 esterification of restrictinol with glycine that leads to restricticin. The sequence is that of Highly reducing polyketide synthase resH from Aspergillus sclerotiorum.